A 103-amino-acid polypeptide reads, in one-letter code: Matrix Gla protein (103 aa).

Positions Met1–Cys19 are cleaved as a signal peptide. Glu21 carries the 4-carboxyglutamate; partial modification. A phosphoserine mark is found at Ser22, Ser25, and Ser28. One can recognise a Gla domain in the interval Arg51 to Arg97. A 4-carboxyglutamate mark is found at Glu56, Glu60, Glu67, and Glu71. Cys73 and Cys79 form a disulfide bridge. Positions Arg99–Ala102 are cleaved as a propeptide — removed in short form; probably by carboxypeptidase N. Lys103 is a propeptide (removed in long form; probably by carboxypeptidase H).

The protein belongs to the osteocalcin/matrix Gla protein family. Post-translationally, requires vitamin K-dependent gamma-carboxylation for its function.

The protein localises to the secreted. Its function is as follows. Associates with the organic matrix of bone and cartilage. Thought to act as an inhibitor of bone formation. In Bos taurus (Bovine), this protein is Matrix Gla protein (MGP).